The primary structure comprises 589 residues: Aspartate--tRNA ligase (589 aa).

L-aspartate is bound at residue glutamate 172. Residues 196-199 (QLFK) form an aspartate region. Position 218 (arginine 218) interacts with L-aspartate. ATP contacts are provided by residues 218–220 (RDE) and glutamine 227. Histidine 449 serves as a coordination point for L-aspartate. Position 483 (glutamate 483) interacts with ATP. L-aspartate is bound at residue arginine 490. ATP is bound at residue 535–538 (GLDR).

It belongs to the class-II aminoacyl-tRNA synthetase family. Type 1 subfamily. In terms of assembly, homodimer.

The protein localises to the cytoplasm. It carries out the reaction tRNA(Asp) + L-aspartate + ATP = L-aspartyl-tRNA(Asp) + AMP + diphosphate. Its function is as follows. Catalyzes the attachment of L-aspartate to tRNA(Asp) in a two-step reaction: L-aspartate is first activated by ATP to form Asp-AMP and then transferred to the acceptor end of tRNA(Asp). This chain is Aspartate--tRNA ligase, found in Actinobacillus succinogenes (strain ATCC 55618 / DSM 22257 / CCUG 43843 / 130Z).